The chain runs to 146 residues: Protein MucA (146 aa).

Active-site for autocatalytic cleavage activity residues include S62 and K99.

This sequence belongs to the peptidase S24 family.

Its function is as follows. Involved in UV protection and mutation. This Escherichia coli protein is Protein MucA (mucA).